The following is a 160-amino-acid chain: MGVTKKPDLTDPVLRAKLAKGMGHNYYGEPAWPNDLLYIFPVVIFGTIACNVGLAVMEPSMIGEPANPFATPLEILPEWYFFPVFQILRTVPNKLLGVLLMAAVPAGLLTVPFLENVNKFQNPFRRPVATTVFLIGTVVSIWLGIGAAMPIDQSLTLGLF.

Helical transmembrane passes span 36 to 56 (LLYIFPVVIFGTIACNVGLAV), 95 to 115 (LLGVLLMAAVPAGLLTVPFLE), and 131 to 151 (TVFLIGTVVSIWLGIGAAMPI).

It belongs to the cytochrome b family. PetD subfamily. As to quaternary structure, the 4 large subunits of the cytochrome b6-f complex are cytochrome b6, subunit IV (17 kDa polypeptide, petD), cytochrome f and the Rieske protein, while the 4 small subunits are petG, petL, petM and petN. The complex functions as a dimer.

It localises to the plastid. The protein resides in the chloroplast thylakoid membrane. Functionally, component of the cytochrome b6-f complex, which mediates electron transfer between photosystem II (PSII) and photosystem I (PSI), cyclic electron flow around PSI, and state transitions. The sequence is that of Cytochrome b6-f complex subunit 4 from Zygnema circumcarinatum (Green alga).